A 378-amino-acid chain; its full sequence is Flap endonuclease 1 (378 aa).

The interval 1–105 is N-domain; sequence MGIKGLNSII…HELDKRTERR (105 aa). Asp-34 is a Mg(2+) binding site. Residues Arg-47 and Arg-71 each coordinate DNA. Mg(2+)-binding residues include Asp-87, Glu-156, Glu-158, Asp-177, and Asp-179. Residues 120-251 are I-domain; it reads EIMKHERRLV…VTALKLIKEH (132 aa). Glu-156 serves as a coordination point for DNA. Positions 229 and 231 each coordinate DNA. Asp-231 serves as a coordination point for Mg(2+). The tract at residues 337–345 is interaction with PCNA; that stretch reads VQGRLDSFF. Residues 356–367 show a composition bias toward low complexity; it reads AASARKAQAAKK. A disordered region spans residues 356–378; that stretch reads AASARKAQAAKKTNQKGKVLKRR. The span at 368-378 shows a compositional bias: basic residues; sequence TNQKGKVLKRR.

Belongs to the XPG/RAD2 endonuclease family. FEN1 subfamily. Interacts with PCNA. Three molecules of FEN1 bind to one PCNA trimer with each molecule binding to one PCNA monomer. PCNA stimulates the nuclease activity without altering cleavage specificity. It depends on Mg(2+) as a cofactor. Phosphorylated. Phosphorylation upon DNA damage induces relocalization to the nuclear plasma.

The protein localises to the nucleus. It is found in the nucleolus. Its subcellular location is the nucleoplasm. It localises to the mitochondrion. In terms of biological role, structure-specific nuclease with 5'-flap endonuclease and 5'-3' exonuclease activities involved in DNA replication and repair. During DNA replication, cleaves the 5'-overhanging flap structure that is generated by displacement synthesis when DNA polymerase encounters the 5'-end of a downstream Okazaki fragment. It enters the flap from the 5'-end and then tracks to cleave the flap base, leaving a nick for ligation. Also involved in the long patch base excision repair (LP-BER) pathway, by cleaving within the apurinic/apyrimidinic (AP) site-terminated flap. Acts as a genome stabilization factor that prevents flaps from equilibrating into structures that lead to duplications and deletions. Also possesses 5'-3' exonuclease activity on nicked or gapped double-stranded DNA, and exhibits RNase H activity. Also involved in replication and repair of rDNA and in repairing mitochondrial DNA. The sequence is that of Flap endonuclease 1 from Eremothecium gossypii (strain ATCC 10895 / CBS 109.51 / FGSC 9923 / NRRL Y-1056) (Yeast).